The primary structure comprises 561 residues: Interleukin-1 receptor-like 2 (561 aa).

An N-terminal signal peptide occupies residues M1 to A21. Ig-like C2-type domains lie at G22–T113, S128–Y215, and S225–A321. The Extracellular segment spans residues G22–R338. N23, N43, N55, N111, and N130 each carry an N-linked (GlcNAc...) asparagine glycan. C44 and C97 are joined by a disulfide. C149 and C199 are disulfide-bonded. N-linked (GlcNAc...) asparagine glycosylation is found at N231, N237, N253, N269, N290, and N302. C252 and C319 are oxidised to a cystine. A helical transmembrane segment spans residues A339–I358. Residues Y359–G561 lie on the Cytoplasmic side of the membrane. Residues K384–M539 enclose the TIR domain. E470 is an active-site residue.

The protein belongs to the interleukin-1 receptor family. In terms of assembly, interacts with IL1RAP; the association is enhanced by IL36B indicative for an functional signaling complex and inhibited by IL36RN. As to expression, predominant expression in the lung and epididymis, with lower expression in cerebral cortex and testis. Expression in the brain is non-neuronal and associated with the cerebral vasculature. Not detected in any cell line tested.

It localises to the membrane. The catalysed reaction is NAD(+) + H2O = ADP-D-ribose + nicotinamide + H(+). Receptor for interleukin-36 (IL36A, IL36B and IL36G). After binding to interleukin-36 associates with the coreceptor IL1RAP to form the interleukin-36 receptor complex which mediates interleukin-36-dependent activation of NF-kappa-B, MAPK and other pathways. The IL-36 signaling system is thought to be present in epithelial barriers and to take part in local inflammatory response; it is similar to the IL-1 system. Seems to be involved in skin inflammatory response by induction of the IL-23/IL-17/IL-22 pathway. Receptor for the interleukin IL36G. Binding to the agonist leads to the activation of NF-kappa-B. This is Interleukin-1 receptor-like 2 (Il1rl2) from Rattus norvegicus (Rat).